Reading from the N-terminus, the 210-residue chain is Outer-membrane lipoprotein LolB (210 aa).

An N-terminal signal peptide occupies residues 1–18 (MKKFTKILSLSTLLFLAG). The N-palmitoyl cysteine moiety is linked to residue Cys-19. Cys-19 carries the S-diacylglycerol cysteine lipid modification.

This sequence belongs to the LolB family. In terms of assembly, monomer.

It is found in the cell outer membrane. Functionally, plays a critical role in the incorporation of lipoproteins in the outer membrane after they are released by the LolA protein. The polypeptide is Outer-membrane lipoprotein LolB (Actinobacillus pleuropneumoniae serotype 5b (strain L20)).